A 303-amino-acid polypeptide reads, in one-letter code: MDALELKNIISDGLLSFPVTDFDQNGDFNKSSYAKRLEWLAPYGASALFAAGGTGEFFSLTGNEYSEVIKTAVDTCRGSVPIIAGAGGPTRQAIEQAKEAERLGAHGILLMPHYLTEASQEGLIEHVKQVCNSVDFGVIFYNRSVSRLNLDSIQKLTEMCPNLIGFKDSSGQIDMMTAVTQTMGDRLSYLGGLPTAEVFAAPYKALGCPVYSSAVFNFIPKTAMEFYNALRSDDFETTNRLIKDFFLPLIKIRDRKSGYAVSMIKAGAKIVGHDAGPVRPPLSDLTQADYEDLAALIATLGPQ.

This sequence belongs to the DapA family.

It carries out the reaction 5-dehydro-4-deoxy-D-glucarate + H(+) = 2,5-dioxopentanoate + CO2 + H2O. The protein operates within carbohydrate acid metabolism; D-glucarate degradation; 2,5-dioxopentanoate from D-glucarate: step 2/2. In Acinetobacter baumannii (strain AB307-0294), this protein is Probable 5-dehydro-4-deoxyglucarate dehydratase.